The following is a 695-amino-acid chain: Elongation factor G 1 (695 aa).

A tr-type G domain is found at 6–284 (KKVRNIGISA…VTRYLPCPAD (279 aa)). GTP-binding positions include 15 to 22 (AHIDSGKT), 82 to 86 (DTPGH), and 136 to 139 (NKCD).

It belongs to the TRAFAC class translation factor GTPase superfamily. Classic translation factor GTPase family. EF-G/EF-2 subfamily.

The protein localises to the cytoplasm. In terms of biological role, catalyzes the GTP-dependent ribosomal translocation step during translation elongation. During this step, the ribosome changes from the pre-translocational (PRE) to the post-translocational (POST) state as the newly formed A-site-bound peptidyl-tRNA and P-site-bound deacylated tRNA move to the P and E sites, respectively. Catalyzes the coordinated movement of the two tRNA molecules, the mRNA and conformational changes in the ribosome. This chain is Elongation factor G 1, found in Syntrophus aciditrophicus (strain SB).